The primary structure comprises 1221 residues: DNA topoisomerase 2 (1221 aa).

Residues Asn65, Asn94, 122 to 124 (SSN), 135 to 142 (GRHGYGAK), and 352 to 354 (QNK) contribute to the ATP site. The Toprim domain occupies 432 to 546 (RTLIVTEGDS…SLLVRNPGFI (115 aa)). 3 residues coordinate Mg(2+): Glu438, Asp515, and Asp517. Residues 681 to 1097 (LAHSVDGLKP…TPVQLWLGEL (417 aa)) enclose the Topo IIA-type catalytic domain. Tyr771 acts as the O-(5'-phospho-DNA)-tyrosine intermediate in catalysis. Positions 952–961 (GLTQRIHING) are interaction with DNA. The disordered stretch occupies residues 1158–1198 (VPPPTKRGAGGRSDGDGGATAAGAAAAVGGRGEKKGPGRAG). A compositionally biased stretch (gly residues) spans 1165 to 1177 (GAGGRSDGDGGAT).

This sequence belongs to the type II topoisomerase family. As to quaternary structure, homodimer. Mg(2+) is required as a cofactor. Mn(2+) serves as cofactor. It depends on Ca(2+) as a cofactor.

It localises to the nucleus. It catalyses the reaction ATP-dependent breakage, passage and rejoining of double-stranded DNA.. In terms of biological role, control of topological states of DNA by transient breakage and subsequent rejoining of DNA strands. Topoisomerase II makes double-strand breaks. This is DNA topoisomerase 2 (TOP2) from Trypanosoma brucei brucei.